Reading from the N-terminus, the 1097-residue chain is DNA-directed RNA polymerase subunit beta (1097 aa).

The disordered stretch occupies residues Q1072–D1097. A compositionally biased stretch (polar residues) spans R1077–T1091.

The protein belongs to the RNA polymerase beta chain family. In terms of assembly, in cyanobacteria the RNAP catalytic core is composed of 2 alpha, 1 beta, 1 beta', 1 gamma and 1 omega subunit. When a sigma factor is associated with the core the holoenzyme is formed, which can initiate transcription.

It catalyses the reaction RNA(n) + a ribonucleoside 5'-triphosphate = RNA(n+1) + diphosphate. DNA-dependent RNA polymerase catalyzes the transcription of DNA into RNA using the four ribonucleoside triphosphates as substrates. This Prochlorococcus marinus (strain AS9601) protein is DNA-directed RNA polymerase subunit beta.